Reading from the N-terminus, the 205-residue chain is Putative 3-methyladenine DNA glycosylase (205 aa).

Belongs to the DNA glycosylase MPG family.

This chain is Putative 3-methyladenine DNA glycosylase, found in Bacillus anthracis (strain A0248).